Consider the following 888-residue polypeptide: Alanine--tRNA ligase (888 aa).

Zn(2+)-binding residues include histidine 564, histidine 568, cysteine 676, and histidine 680.

The protein belongs to the class-II aminoacyl-tRNA synthetase family. It depends on Zn(2+) as a cofactor.

The protein resides in the cytoplasm. It carries out the reaction tRNA(Ala) + L-alanine + ATP = L-alanyl-tRNA(Ala) + AMP + diphosphate. Its function is as follows. Catalyzes the attachment of alanine to tRNA(Ala) in a two-step reaction: alanine is first activated by ATP to form Ala-AMP and then transferred to the acceptor end of tRNA(Ala). Also edits incorrectly charged Ser-tRNA(Ala) and Gly-tRNA(Ala) via its editing domain. This is Alanine--tRNA ligase from Bartonella quintana (strain Toulouse) (Rochalimaea quintana).